Here is a 197-residue protein sequence, read N- to C-terminus: UDP-N-acetylglucosamine transferase subunit ALG13 (197 aa).

Belongs to the glycosyltransferase 28 family. As to quaternary structure, heterodimer with ALG14 to form a functional enzyme.

The protein localises to the endoplasmic reticulum. It catalyses the reaction an N-acetyl-alpha-D-glucosaminyl-diphospho-di-trans,poly-cis-dolichol + UDP-N-acetyl-alpha-D-glucosamine = an N,N'-diacetylchitobiosyl-diphospho-di-trans,poly-cis-dolichol + UDP + H(+). Functionally, involved in protein N-glycosylation. Essential for the second step of the dolichol-linked oligosaccharide pathway. The chain is UDP-N-acetylglucosamine transferase subunit ALG13 (ALG13) from Kluyveromyces lactis (strain ATCC 8585 / CBS 2359 / DSM 70799 / NBRC 1267 / NRRL Y-1140 / WM37) (Yeast).